The primary structure comprises 206 residues: Methyltransferase-like 26 (206 aa).

The protein belongs to the UPF0585 family.

This chain is Methyltransferase-like 26, found in Danio rerio (Zebrafish).